The sequence spans 420 residues: 20-oxo-5-O-mycaminosyltylactone 23-monooxygenase (420 aa).

Positions 1 to 28 are disordered; it reads MSSSGDARPSQKGILLPAARANDTDEAA. Positions 118, 122, 311, 367, and 369 each coordinate heme.

Belongs to the cytochrome P450 family.

The catalysed reaction is 20-oxo-5-O-beta-D-mycaminosyltylonolide + 2 reduced [2Fe-2S]-[ferredoxin] + O2 + 2 H(+) = 5-O-beta-D-mycaminosyltylonolide + 2 oxidized [2Fe-2S]-[ferredoxin] + H2O. It functions in the pathway antibiotic biosynthesis; tylosin biosynthesis. Involved in the biosynthesis of the complex macrolide antibiotic tylosin. Catalyzes the hydroxylation of 20-oxo-5-O-beta-mycaminosyltylactone at the C-23 position to yield 5-O-beta-mycaminosyltylonolide. This is 20-oxo-5-O-mycaminosyltylactone 23-monooxygenase from Streptomyces fradiae (Streptomyces roseoflavus).